The primary structure comprises 621 residues: Interferon-induced GTP-binding protein Mx1 (621 aa).

Positions D31–P304 constitute a Dynamin-type G domain. The G1 motif stretch occupies residues G41–S48. GTP is bound at residue G41–S48. Positions V66 to R68 are G2 motif. Residues D142 to G145 form a G3 motif region. GTP contacts are provided by residues D142–I146 and T211–D214. The tract at residues T211–D214 is G4 motif. The segment at K243–G246 is G5 motif. The GED domain maps to L535–F621.

The protein belongs to the TRAFAC class dynamin-like GTPase superfamily. Dynamin/Fzo/YdjA family.

The protein resides in the cytoplasm. In terms of biological role, does not inhibit strain RB-1 of the fish pathogen, infectious hematopoietic necrosis virus (IHNV). This is Interferon-induced GTP-binding protein Mx1 (mx1) from Oncorhynchus mykiss (Rainbow trout).